We begin with the raw amino-acid sequence, 94 residues long: ATP synthase subunit c (94 aa).

Transmembrane regions (helical) follow at residues 15 to 35 and 58 to 78; these read IGVGVILAAAGLGSAIGWGLI and FIFAGLMESFPFIILAFAMWF.

The protein belongs to the ATPase C chain family. As to quaternary structure, F-type ATPases have 2 components, F(1) - the catalytic core - and F(0) - the membrane proton channel. F(1) has five subunits: alpha(3), beta(3), gamma(1), delta(1), epsilon(1). F(0) has three main subunits: a(1), b(2) and c(10-14). The alpha and beta chains form an alternating ring which encloses part of the gamma chain. F(1) is attached to F(0) by a central stalk formed by the gamma and epsilon chains, while a peripheral stalk is formed by the delta and b chains.

Its subcellular location is the cell inner membrane. Functionally, f(1)F(0) ATP synthase produces ATP from ADP in the presence of a proton or sodium gradient. F-type ATPases consist of two structural domains, F(1) containing the extramembraneous catalytic core and F(0) containing the membrane proton channel, linked together by a central stalk and a peripheral stalk. During catalysis, ATP synthesis in the catalytic domain of F(1) is coupled via a rotary mechanism of the central stalk subunits to proton translocation. In terms of biological role, key component of the F(0) channel; it plays a direct role in translocation across the membrane. A homomeric c-ring of between 10-14 subunits forms the central stalk rotor element with the F(1) delta and epsilon subunits. This is ATP synthase subunit c from Hydrogenovibrio crunogenus (strain DSM 25203 / XCL-2) (Thiomicrospira crunogena).